Reading from the N-terminus, the 570-residue chain is Adenine deaminase (570 aa).

The protein belongs to the metallo-dependent hydrolases superfamily. Adenine deaminase family. Mn(2+) is required as a cofactor.

It carries out the reaction adenine + H2O + H(+) = hypoxanthine + NH4(+). This Petrotoga mobilis (strain DSM 10674 / SJ95) protein is Adenine deaminase.